The chain runs to 365 residues: tRNA(Met) cytidine acetate ligase (365 aa).

ATP is bound by residues I7–L20, G96, N152, and R175.

This sequence belongs to the TmcAL family.

The protein localises to the cytoplasm. The catalysed reaction is cytidine(34) in elongator tRNA(Met) + acetate + ATP = N(4)-acetylcytidine(34) in elongator tRNA(Met) + AMP + diphosphate. In terms of biological role, catalyzes the formation of N(4)-acetylcytidine (ac(4)C) at the wobble position of elongator tRNA(Met), using acetate and ATP as substrates. First activates an acetate ion to form acetyladenylate (Ac-AMP) and then transfers the acetyl group to tRNA to form ac(4)C34. The polypeptide is tRNA(Met) cytidine acetate ligase (Streptococcus pneumoniae (strain ATCC 700669 / Spain 23F-1)).